Here is a 210-residue protein sequence, read N- to C-terminus: Menaquinone reductase, multiheme cytochrome c subunit (210 aa).

A helical membrane pass occupies residues glycine 20–phenylalanine 40. Heme is bound by residues cysteine 67, cysteine 70, histidine 71, cysteine 88, cysteine 91, histidine 92, cysteine 140, cysteine 143, histidine 144, cysteine 152, cysteine 155, histidine 156, cysteine 186, cysteine 189, histidine 190, cysteine 205, cysteine 208, and histidine 209.

The protein belongs to the multiheme cytochrome c family. In terms of assembly, the Qrc complex is composed of four subunits: QrcA, QrcB, QrcC and QrcD. Can form a supercomplex with the [NiFe] hydrogenase HynA1 and the tetraheme Type I cytochrome c3 TpIc(3), its physiological electron donors. Heme c is required as a cofactor.

The protein localises to the cell inner membrane. Functionally, component of the respiratory Qrc complex, that catalyzes the reduction of the menaquinone pool using electrons transferred from the reduced periplasmic cytochrome c3, and which is probably involved in sulfate respiration. Is likely essential for growth on H(2) or formate since the periplasmic hydrogenases and/or formate dehydrogenases act as primary electron donors for the Qrc complex. This chain is Menaquinone reductase, multiheme cytochrome c subunit, found in Nitratidesulfovibrio vulgaris (strain ATCC 29579 / DSM 644 / CCUG 34227 / NCIMB 8303 / VKM B-1760 / Hildenborough) (Desulfovibrio vulgaris).